A 442-amino-acid polypeptide reads, in one-letter code: 3-isopropylmalate dehydratase large subunit (442 aa).

Residues Cys-347, Cys-407, and Cys-410 each contribute to the [4Fe-4S] cluster site.

Belongs to the aconitase/IPM isomerase family. LeuC type 1 subfamily. As to quaternary structure, heterodimer of LeuC and LeuD. [4Fe-4S] cluster is required as a cofactor.

It catalyses the reaction (2R,3S)-3-isopropylmalate = (2S)-2-isopropylmalate. Its pathway is amino-acid biosynthesis; L-leucine biosynthesis; L-leucine from 3-methyl-2-oxobutanoate: step 2/4. Its function is as follows. Catalyzes the isomerization between 2-isopropylmalate and 3-isopropylmalate, via the formation of 2-isopropylmaleate. In Buchnera aphidicola subsp. Uroleucon solidaginis, this protein is 3-isopropylmalate dehydratase large subunit.